The chain runs to 68 residues: Large ribosomal subunit protein bL35 (68 aa).

Belongs to the bacterial ribosomal protein bL35 family.

The chain is Large ribosomal subunit protein bL35 from Persephonella marina (strain DSM 14350 / EX-H1).